We begin with the raw amino-acid sequence, 344 residues long: Ketol-acid reductoisomerase (NADP(+)) (344 aa).

One can recognise a KARI N-terminal Rossmann domain in the interval Met1–Thr181. Residues Tyr25–Gln28, Arg48, Ser52, and Asp82–Gln85 contribute to the NADP(+) site. His107 is an active-site residue. NADP(+) is bound at residue Gly133. The region spanning Thr182–Ile327 is the KARI C-terminal knotted domain. Mg(2+) contacts are provided by Asp190, Glu194, Glu226, and Glu230. Residue Ser251 coordinates substrate.

This sequence belongs to the ketol-acid reductoisomerase family. Mg(2+) serves as cofactor.

It carries out the reaction (2R)-2,3-dihydroxy-3-methylbutanoate + NADP(+) = (2S)-2-acetolactate + NADPH + H(+). The enzyme catalyses (2R,3R)-2,3-dihydroxy-3-methylpentanoate + NADP(+) = (S)-2-ethyl-2-hydroxy-3-oxobutanoate + NADPH + H(+). Its pathway is amino-acid biosynthesis; L-isoleucine biosynthesis; L-isoleucine from 2-oxobutanoate: step 2/4. The protein operates within amino-acid biosynthesis; L-valine biosynthesis; L-valine from pyruvate: step 2/4. In terms of biological role, involved in the biosynthesis of branched-chain amino acids (BCAA). Catalyzes an alkyl-migration followed by a ketol-acid reduction of (S)-2-acetolactate (S2AL) to yield (R)-2,3-dihydroxy-isovalerate. In the isomerase reaction, S2AL is rearranged via a Mg-dependent methyl migration to produce 3-hydroxy-3-methyl-2-ketobutyrate (HMKB). In the reductase reaction, this 2-ketoacid undergoes a metal-dependent reduction by NADPH to yield (R)-2,3-dihydroxy-isovalerate. In Lysinibacillus sphaericus (strain C3-41), this protein is Ketol-acid reductoisomerase (NADP(+)).